The following is a 222-amino-acid chain: Recombination protein RecR (222 aa).

The segment at 57-72 (CPVCFNITDAERCDVC) adopts a C4-type zinc-finger fold. A Toprim domain is found at 80 to 173 (SVICVVEEPG…VVSRIAYGLP (94 aa)). The interval 189 to 222 (ALSGRRRVSEPASPPPPRRNDEEQDGAPARPPSH) is disordered.

Belongs to the RecR family.

In terms of biological role, may play a role in DNA repair. It seems to be involved in an RecBC-independent recombinational process of DNA repair. It may act with RecF and RecO. The polypeptide is Recombination protein RecR (Deinococcus geothermalis (strain DSM 11300 / CIP 105573 / AG-3a)).